Consider the following 358-residue polypeptide: Protein-L-isoaspartate O-methyltransferase domain-containing protein 1 (358 aa).

The N-myristoyl glycine moiety is linked to residue Gly-2. The active site involves Ser-64. AdoMet binding motif regions lie at residues 85–94 (LNLGSGTGYL), 160–164 (YDRIY), and 181–191 (LKVGGILVMPI). The tract at residues 240–250 (VRNLQDLARIY) is BC-box. The interval 300-339 (PLDSEEDERMEDDNKEEEDKDHSEALKPEEPPRNLLREKI) is disordered. Acidic residues predominate over residues 302–318 (DSEEDERMEDDNKEEED). Residues 319–339 (KDHSEALKPEEPPRNLLREKI) show a composition bias toward basic and acidic residues. The tract at residues 342–345 (LPLP) is CUL-box.

Belongs to the methyltransferase superfamily. L-isoaspartyl/D-aspartyl protein methyltransferase family. Component of the probable ECS(PCMTD1) E3 ubiquitin-protein ligase complex, at least composed of CUL5, ELOB, ELOC, RBX2 and PCMTD1.

Its subcellular location is the cytoplasm. The protein localises to the membrane. Its function is as follows. Substrate recognition component of an ECS (Elongin BC-CUL5-SOCS-box protein) E3 ubiquitin ligase complex which mediates the ubiquitination and subsequent proteasomal degradation of target proteins. Specifically binds to the methyltransferase cofactor S-adenosylmethionine (AdoMet) via the N-terminal AdoMet binding motif, but does not display methyltransferase activity. May provide an alternate maintenance pathway for modified proteins by acting as a damage-specific E3 ubiquitin ligase adaptor protein. This chain is Protein-L-isoaspartate O-methyltransferase domain-containing protein 1 (PCMTD1), found in Gallus gallus (Chicken).